Consider the following 469-residue polypeptide: Argininosuccinate lyase (469 aa).

It belongs to the lyase 1 family. Argininosuccinate lyase subfamily.

It localises to the cytoplasm. It carries out the reaction 2-(N(omega)-L-arginino)succinate = fumarate + L-arginine. It functions in the pathway amino-acid biosynthesis; L-arginine biosynthesis; L-arginine from L-ornithine and carbamoyl phosphate: step 3/3. This is Argininosuccinate lyase from Burkholderia orbicola (strain MC0-3).